A 637-amino-acid polypeptide reads, in one-letter code: 1-deoxy-D-xylulose-5-phosphate synthase (637 aa).

Thiamine diphosphate is bound by residues His76 and 117–119 (GHS). Residue Asp148 participates in Mg(2+) binding. Thiamine diphosphate is bound by residues 149 to 150 (GA), Asn177, Tyr294, and Glu381. Asn177 is a binding site for Mg(2+).

It belongs to the transketolase family. DXPS subfamily. As to quaternary structure, homodimer. Mg(2+) is required as a cofactor. Thiamine diphosphate serves as cofactor.

It catalyses the reaction D-glyceraldehyde 3-phosphate + pyruvate + H(+) = 1-deoxy-D-xylulose 5-phosphate + CO2. Its pathway is metabolic intermediate biosynthesis; 1-deoxy-D-xylulose 5-phosphate biosynthesis; 1-deoxy-D-xylulose 5-phosphate from D-glyceraldehyde 3-phosphate and pyruvate: step 1/1. In terms of biological role, catalyzes the acyloin condensation reaction between C atoms 2 and 3 of pyruvate and glyceraldehyde 3-phosphate to yield 1-deoxy-D-xylulose-5-phosphate (DXP). The sequence is that of 1-deoxy-D-xylulose-5-phosphate synthase from Neisseria gonorrhoeae (strain NCCP11945).